The sequence spans 1219 residues: Pleckstrin homology domain-containing family G member 3 (1219 aa).

Residues 1 to 10 (MPVSTSLHQD) show a composition bias toward polar residues. The disordered stretch occupies residues 1 to 66 (MPVSTSLHQD…HLPNSNNNSS (66 aa)). Low complexity predominate over residues 18–46 (SLTSTTSSSGSSCDSRSAMEEPSSSEAPA). Serine 76 is modified (phosphoserine). The 180-residue stretch at 93-272 (YLGRVVREIV…TCVAWYINDM (180 aa)) folds into the DH domain. Positions 296-394 (DLTTYGELVL…WTHHIKRLIL (99 aa)) constitute a PH domain. Residues 431–442 (WSSQDEVSTNVR) are compositionally biased toward polar residues. 2 disordered regions span residues 431 to 599 (WSSQ…PSVL) and 613 to 708 (FSRR…KESA). Residue serine 433 is modified to Phosphoserine. Residues 446–463 (RQSEPTKHLLRQLNEKAR) show a composition bias toward basic and acidic residues. A phosphoserine mark is found at serine 576, serine 577, serine 618, serine 631, serine 640, serine 643, and serine 647. The span at 630 to 645 (GSPRLVSRSSSVLSLE) shows a compositional bias: low complexity. Positions 696 to 708 (EPDRSSCKKKESA) are enriched in basic and acidic residues. Serine 741, serine 779, and serine 827 each carry phosphoserine. Disordered regions lie at residues 756 to 780 (RFNS…VGSR), 821 to 840 (MESS…ANGF), 859 to 878 (EESA…RSPA), 955 to 1133 (APER…LYVT), and 1146 to 1207 (VMEK…RVRN). Residues 826–836 (GSPGKGPGQGQ) are compositionally biased toward gly residues. A compositionally biased stretch (low complexity) spans 859–873 (EESATASPESSSPTE). A phosphoserine mark is found at serine 962, serine 1011, serine 1023, serine 1037, and serine 1040. Over residues 1020–1029 (SAVSQRTTSP) the composition is skewed to polar residues. Positions 1049 to 1065 (DVRELCSKYASRDEARR) are enriched in basic and acidic residues. Position 1081 is a phosphoserine (serine 1081). Arginine 1107 is modified (omega-N-methylarginine). Positions 1187-1197 (QPKEEGSRDPA) are enriched in basic and acidic residues.

It localises to the cytoplasm. It is found in the cytoskeleton. Plays a role in controlling cell polarity and cell motility by selectively binding newly polymerized actin and activating RAC1 and CDC42 to enhance local actin polymerization. This is Pleckstrin homology domain-containing family G member 3 from Homo sapiens (Human).